The chain runs to 137 residues: Large ribosomal subunit protein uL16 (137 aa).

The protein belongs to the universal ribosomal protein uL16 family. Part of the 50S ribosomal subunit.

Functionally, binds 23S rRNA and is also seen to make contacts with the A and possibly P site tRNAs. In Sorangium cellulosum (strain So ce56) (Polyangium cellulosum (strain So ce56)), this protein is Large ribosomal subunit protein uL16.